A 104-amino-acid chain; its full sequence is Large ribosomal subunit protein bL21 (104 aa).

It belongs to the bacterial ribosomal protein bL21 family. In terms of assembly, part of the 50S ribosomal subunit. Contacts protein L20.

In terms of biological role, this protein binds to 23S rRNA in the presence of protein L20. In Streptococcus pyogenes serotype M1, this protein is Large ribosomal subunit protein bL21.